The chain runs to 435 residues: MALPVVAIVGQPNVGKSTLFNRIINQRLAIVEDKPGVTRDRNYAQAEWMGHKFDLIDTGGITWEGGKIEEEIRAQAEIAIEEADVIVMLTNVVNHVTDLDERIAHLLYRTKKPVILAVNKADNPEQRNDIYDFYSLGLGDPIPVSSSHGTGIGDLLDEIVSDFPAEKDSQANDVISFSVIGRPNVGKSSIVNKLLGEDRVIVANEEGTTRDAVDTPFTKDGVKFKVVDTAGIRRRGKVYEKTEKYSVLRAVAAIERSDVVLLVLDASTGIREQDKHVAGYAHEAGRGIIIVVNKWDLPKKNSTSAKEFEREIRAEFQYLDYAPILFVSAKTGQRLDQIPSMVKEVYDNQNQRIQSSVLNDLLLEASKLVPTPMIKGKRLRVYYMTQVSTNPPTFVVFVNDPELMHFSYERFLINQLRQNFDFAGTPIKILPRKRK.

2 consecutive EngA-type G domains span residues 4 to 167 (PVVA…PAEK) and 175 to 350 (ISFS…DNQN). GTP contacts are provided by residues 10 to 17 (GQPNVGKS), 57 to 61 (DTGGI), 119 to 122 (NKAD), 181 to 188 (GRPNVGKS), 228 to 232 (DTAGI), and 293 to 296 (NKWD). Positions 351 to 435 (QRIQSSVLND…PIKILPRKRK (85 aa)) constitute a KH-like domain.

Belongs to the TRAFAC class TrmE-Era-EngA-EngB-Septin-like GTPase superfamily. EngA (Der) GTPase family. Associates with the 50S ribosomal subunit.

In terms of biological role, GTPase that plays an essential role in the late steps of ribosome biogenesis. This Lactobacillus helveticus (strain DPC 4571) protein is GTPase Der.